We begin with the raw amino-acid sequence, 712 residues long: Lactoperoxidase (712 aa).

The signal sequence occupies residues Met1–Ser22. Residues Asp23–Arg100 constitute a propeptide that is removed on maturation. The N-linked (GlcNAc...) asparagine glycan is linked to Asn106. 4 cysteine pairs are disulfide-bonded: Cys123–Cys284, Cys132–Cys145, Cys246–Cys256, and Cys250–Cys274. Asn212 carries an N-linked (GlcNAc...) asparagine glycan. Asp225 provides a ligand contact to heme b. The active-site Proton acceptor is His226. Position 227 (Asp227) interacts with Ca(2+). Ca(2+) contacts are provided by Thr301, Phe303, Asp305, and Ser307. Position 315 is a phosphoserine (Ser315). 2 N-linked (GlcNAc...) asparagine glycosylation sites follow: Asn322 and Asn358. A disulfide bridge connects residues Cys354 and Cys365. A heme b-binding site is contributed by Glu375. A glycan (N-linked (GlcNAc...) asparagine) is linked at Asn449. Position 468 (His468) interacts with heme b. Tyr482 bears the 3'-nitrotyrosine mark. 2 cysteine pairs are disulfide-bonded: Cys573–Cys630 and Cys671–Cys696.

Belongs to the peroxidase family. XPO subfamily. It depends on Ca(2+) as a cofactor. The cofactor is heme b. Mammary gland; milk.

It is found in the secreted. The protein resides in the cytoplasm. The catalysed reaction is 2 a phenolic donor + H2O2 = 2 a phenolic radical donor + 2 H2O. The enzyme catalyses thiocyanate + H2O2 + H(+) = hypothiocyanous acid + H2O. It carries out the reaction iodide + H2O2 = hypoiodite + H2O. Heme-containing oxidoreductase which catalyzes the conversion of thiocyanate (SCN(-)) into antimicrobial agent hypothiocyanous acid (OSCN(-)) in the presence of hydrogen peroxide (H2O2). Also involved in the conversion of iodide (I(-)) into hypoiodite (IO(-)) in the presence of H2O2. Responsible for the inactivation of a wide range of micro-organisms and hence, important component of defense mechanism. The lactoperoxidase-SCN(-)-H2O2 system shows antibacterial properties against some streptococci strains. The lactoperoxidase-I(-)-H2O2 system shows antibacterial properties against E.coli. May protect the udder from infection and may promote growth in newborns. May be implicated in airway host defense against infection. May contribute to maintaining an appropriate H2O2 cellular level, therefore protecting cells from H2O2-caused injuries and inflammation. In Bos taurus (Bovine), this protein is Lactoperoxidase (LPO).